Here is a 642-residue protein sequence, read N- to C-terminus: Threonine--tRNA ligase (642 aa).

Residues Met-1–Thr-61 enclose the TGS domain. The interval Asp-243 to Pro-534 is catalytic. The Zn(2+) site is built by Cys-334, His-385, and His-511.

It belongs to the class-II aminoacyl-tRNA synthetase family. Homodimer. It depends on Zn(2+) as a cofactor.

It localises to the cytoplasm. It carries out the reaction tRNA(Thr) + L-threonine + ATP = L-threonyl-tRNA(Thr) + AMP + diphosphate + H(+). Functionally, catalyzes the attachment of threonine to tRNA(Thr) in a two-step reaction: L-threonine is first activated by ATP to form Thr-AMP and then transferred to the acceptor end of tRNA(Thr). Also edits incorrectly charged L-seryl-tRNA(Thr). The protein is Threonine--tRNA ligase of Shewanella oneidensis (strain ATCC 700550 / JCM 31522 / CIP 106686 / LMG 19005 / NCIMB 14063 / MR-1).